A 296-amino-acid chain; its full sequence is MKFTIVLFTLISVTVAAAATTTTTAAANRIQNKAYAYYYCNSYCTQAVNDENSCGYYDTDVSNQEYYACLCTKSSYYNNLRSCDCFTKVVYYYSTSICSRANVGTYVGGRTSTTWGVSATKYRSSTSTSSLTRKSSSIGASPSIAIASSTKESSSTESSSSLEQSSSAGQSSSTEQSPSTEVSSSSSIEESSSNQDISSTDSITTISSDSSTGNTDSPTQGGGGNSGNNGSNGDGGNDASGGGGVVNENEQASSPPSSQSSTNSNQPNSSQTAPGAANYLSSVSVGTLMILVLGLI.

The signal sequence occupies residues 1–18; the sequence is MKFTIVLFTLISVTVAAA. Residues 146-212 show a composition bias toward low complexity; that stretch reads IASSTKESSS…ITTISSDSST (67 aa). The disordered stretch occupies residues 146–276; that stretch reads IASSTKESSS…PNSSQTAPGA (131 aa). The segment covering 220-245 has biased composition (gly residues); it reads QGGGGNSGNNGSNGDGGNDASGGGGV. Asn-229 and Asn-268 each carry an N-linked (GlcNAc...) asparagine glycan. The span at 247-274 shows a compositional bias: low complexity; the sequence is NENEQASSPPSSQSSTNSNQPNSSQTAP. A lipid anchor (GPI-anchor amidated glycine) is attached at Gly-275. Residues 276 to 296 constitute a propeptide, removed in mature form; sequence AANYLSSVSVGTLMILVLGLI.

The protein belongs to the IHD1 family. In terms of processing, the GPI-anchor is attached to the protein in the endoplasmic reticulum and serves to target the protein to the cell surface. There, the glucosamine-inositol phospholipid moiety is cleaved off and the GPI-modified mannoprotein is covalently attached via its lipidless GPI glycan remnant to the 1,6-beta-glucan of the outer cell wall layer.

It localises to the secreted. It is found in the cell wall. Its subcellular location is the membrane. In terms of biological role, probable GPI-anchored cell wall protein that may be involved in cell wall organization, hyphal growth, as well as in virulence. The sequence is that of Probable cell wall protein PGA41 (PGA41) from Candida albicans (strain SC5314 / ATCC MYA-2876) (Yeast).